Consider the following 439-residue polypeptide: Serine/threonine-protein kinase 2 (439 aa).

One can recognise a Protein kinase domain in the interval 87 to 439 (NDDFYHISTG…IFSDWINGGN (353 aa)). Residues 93–101 (ISTGGYGIV) and Lys117 each bind ATP. Asp307 acts as the Proton acceptor in catalysis.

It belongs to the protein kinase superfamily. Ser/Thr protein kinase family. Post-translationally, phosphorylated in vivo. Autophosphorylated in vitro.

The protein resides in the host endoplasmic reticulum. It is found in the host endoplasmic reticulum-Golgi intermediate compartment. The catalysed reaction is L-seryl-[protein] + ATP = O-phospho-L-seryl-[protein] + ADP + H(+). The enzyme catalyses L-threonyl-[protein] + ATP = O-phospho-L-threonyl-[protein] + ADP + H(+). In terms of biological role, essential serine-protein kinase involved in the early stage of virion morphogenesis. The chain is Serine/threonine-protein kinase 2 (OPG054) from Vaccinia virus (strain Tian Tan) (VACV).